The primary structure comprises 145 residues: Anaerobic nitrite reductase NSHB5 (145 aa).

The Globin domain maps to 2 to 142 (GFSETQEELV…LAAAIKEEMK (141 aa)). The Homodimerization motif lies at 35-39 (EIAPA). The heme b site is built by S45, H59, K61, R84, T88, and H89. Positions 96–108 (DAYFEVVKTALLD) match the Homodimerization motif.

It belongs to the plant globin family. As to quaternary structure, homodimer. Heme b serves as cofactor. In terms of tissue distribution, expressed in embryonic (embryos, coleoptiles and seminal roots) and vegetative (leaves and roots) organs.

It is found in the cytoplasm. It localises to the nucleus. The enzyme catalyses Fe(III)-heme b-[protein] + nitric oxide + H2O = Fe(II)-heme b-[protein] + nitrite + 2 H(+). In terms of biological role, phytoglobin that reduces nitrite to nitric oxide under anoxic conditions (e.g. during flooding or in waterlogged soil). May not function as an oxygen storage or transport protein. Has an unusually high affinity for O(2) through an hexacoordinate heme iron because of a very low dissociation constant. The sequence is that of Anaerobic nitrite reductase NSHB5 from Oryza sativa subsp. japonica (Rice).